We begin with the raw amino-acid sequence, 878 residues long: Alanine--tRNA ligase (878 aa).

Residues H565, H569, C667, and H671 each coordinate Zn(2+).

Belongs to the class-II aminoacyl-tRNA synthetase family. The cofactor is Zn(2+).

It is found in the cytoplasm. It carries out the reaction tRNA(Ala) + L-alanine + ATP = L-alanyl-tRNA(Ala) + AMP + diphosphate. Its function is as follows. Catalyzes the attachment of alanine to tRNA(Ala) in a two-step reaction: alanine is first activated by ATP to form Ala-AMP and then transferred to the acceptor end of tRNA(Ala). Also edits incorrectly charged Ser-tRNA(Ala) and Gly-tRNA(Ala) via its editing domain. This Desulforamulus reducens (strain ATCC BAA-1160 / DSM 100696 / MI-1) (Desulfotomaculum reducens) protein is Alanine--tRNA ligase.